The chain runs to 234 residues: Sugar fermentation stimulation protein A (234 aa).

Residues 201–220 (LLSEAQQRGVEILAYKAELS) constitute a DNA-binding region (H-T-H motif).

It belongs to the SfsA family.

Its function is as follows. Binds to DNA non-specifically. Could be a regulatory factor involved in maltose metabolism. In Escherichia coli O7:K1 (strain IAI39 / ExPEC), this protein is Sugar fermentation stimulation protein A.